The primary structure comprises 1067 residues: Protein bric-a-brac 2 (1067 aa).

Residues 30–121 are disordered; sequence MAPPEEPKMV…PPRPLTSSEV (92 aa). 2 stretches are compositionally biased toward basic and acidic residues: residues 47 to 62 and 86 to 98; these read HLED…REVE and KSPE…ELVK. Tyr-55 carries the phosphotyrosine modification. Phosphoserine is present on residues Ser-56, Ser-87, and Ser-147. The BTB domain occupies 223–288; sequence VDVTLSCEGH…MYKGEINVCQ (66 aa). 3 disordered regions span residues 312–412, 444–505, and 525–563; these read GRGE…QSQP, ANQR…AAQH, and GAAG…SHHD. Residues 326-335 show a composition bias toward acidic residues; the sequence is FDDEDEEEEL. Ser-377 is modified (phosphoserine). Residue Thr-384 is modified to Phosphothreonine. Residues 391–412 are compositionally biased toward low complexity; it reads GGESEISERGSSGTPGQSQSQP. Composition is skewed to gly residues over residues 525 to 538 and 545 to 556; these read GAAG…GSGS and GGTGVAGSGAGA. Residues 635-687 enclose the HTH psq-type domain; that stretch reads FRERGPLKSWRPEAMAEAIFSVLKEGLSLSQAARKFDIPYPTFVLYANRVHNM. The H-T-H motif DNA-binding region spans 645-690; it reads RPEAMAEAIFSVLKEGLSLSQAARKFDIPYPTFVLYANRVHNMLGP. Residues 697–708 constitute a DNA-binding region (a.T hook); sequence DPRPKARGRPQR. 3 disordered regions span residues 796–829, 860–879, and 891–967; these read QILS…PHAQ, AKHQ…PDLS, and VMPS…PYSA. Low complexity predominate over residues 812-829; sequence AHHQQQPSHHQQQSPHAQ. The segment covering 904–914 has biased composition (low complexity); that stretch reads AAPNSAASYAR. Positions 915 to 933 are enriched in basic and acidic residues; that stretch reads ELSRERERDRERERERELS. A compositionally biased stretch (low complexity) spans 934–949; it reads RQYGSQSRGSSSGSGS.

In terms of tissue distribution, leg imaginal disk at the central region of the tarsus and in eye antenna disk at the basal cylinder.

The protein resides in the nucleus. Functionally, probably acts as a transcriptional regulator. Required for the specification of the tarsal segment. Also involved in antenna development. This Drosophila melanogaster (Fruit fly) protein is Protein bric-a-brac 2 (bab2).